Here is a 383-residue protein sequence, read N- to C-terminus: Lipid-A-disaccharide synthase (383 aa).

Belongs to the LpxB family.

It catalyses the reaction a lipid X + a UDP-2-N,3-O-bis[(3R)-3-hydroxyacyl]-alpha-D-glucosamine = a lipid A disaccharide + UDP + H(+). Its pathway is bacterial outer membrane biogenesis; LPS lipid A biosynthesis. Its function is as follows. Condensation of UDP-2,3-diacylglucosamine and 2,3-diacylglucosamine-1-phosphate to form lipid A disaccharide, a precursor of lipid A, a phosphorylated glycolipid that anchors the lipopolysaccharide to the outer membrane of the cell. The polypeptide is Lipid-A-disaccharide synthase (Alcanivorax borkumensis (strain ATCC 700651 / DSM 11573 / NCIMB 13689 / SK2)).